We begin with the raw amino-acid sequence, 430 residues long: tRNA(Ile)-lysidine synthase (430 aa).

21–26 (SGGLDS) is an ATP binding site.

Belongs to the tRNA(Ile)-lysidine synthase family.

The protein resides in the cytoplasm. It catalyses the reaction cytidine(34) in tRNA(Ile2) + L-lysine + ATP = lysidine(34) in tRNA(Ile2) + AMP + diphosphate + H(+). Its function is as follows. Ligates lysine onto the cytidine present at position 34 of the AUA codon-specific tRNA(Ile) that contains the anticodon CAU, in an ATP-dependent manner. Cytidine is converted to lysidine, thus changing the amino acid specificity of the tRNA from methionine to isoleucine. This Salmonella choleraesuis (strain SC-B67) protein is tRNA(Ile)-lysidine synthase.